The sequence spans 812 residues: Phospholipase D alpha 1 (812 aa).

The 130-residue stretch at 1–130 (MAQILLHGTL…LGGEEIDKWL (130 aa)) folds into the C2 domain. A Ca(2+)-binding site is contributed by Asp190. Positions 330-368 (TMFTHHQKIVVVDHEMPNQGSQQRRIVSFIGGIDLCDGR) constitute a PLD phosphodiesterase 1 domain. Residues His335, Lys337, and Asp342 contribute to the active site. His335 contributes to the a 1,2-diacyl-sn-glycero-3-phosphate binding site. Residues His374 and His408 each contribute to the Ca(2+) site. Positions 524 and 663 each coordinate a 1,2-diacyl-sn-glycero-3-phosphate. A PLD phosphodiesterase 2 domain is found at 658-685 (FMIYVHTKMMIVDDEYIIIGSANINQRS). Catalysis depends on residues His663, Lys665, and Asp670. Ca(2+) is bound at residue Glu724.

It belongs to the phospholipase D family. C2-PLD subfamily. As to quaternary structure, monomer. Requires Ca(2+) as cofactor.

It catalyses the reaction a 1,2-diacyl-sn-glycero-3-phosphocholine + H2O = a 1,2-diacyl-sn-glycero-3-phosphate + choline + H(+). In terms of biological role, hydrolyzes glycerol-phospholipids at the terminal phosphodiesteric bond. Plays an important role in various cellular processes. The polypeptide is Phospholipase D alpha 1 (PLD1) (Zea mays (Maize)).